A 689-amino-acid chain; its full sequence is DNA-directed RNA polymerase subunit beta' (689 aa).

The Zn(2+) site is built by Cys-76, Cys-78, Cys-94, and Cys-97. Mg(2+) contacts are provided by Asp-496, Asp-498, and Asp-500.

This sequence belongs to the RNA polymerase beta' chain family. RpoC1 subfamily. As to quaternary structure, in plastids the minimal PEP RNA polymerase catalytic core is composed of four subunits: alpha, beta, beta', and beta''. When a (nuclear-encoded) sigma factor is associated with the core the holoenzyme is formed, which can initiate transcription. The cofactor is Mg(2+). Zn(2+) serves as cofactor.

It localises to the plastid. The protein resides in the chloroplast. It catalyses the reaction RNA(n) + a ribonucleoside 5'-triphosphate = RNA(n+1) + diphosphate. Its function is as follows. DNA-dependent RNA polymerase catalyzes the transcription of DNA into RNA using the four ribonucleoside triphosphates as substrates. The polypeptide is DNA-directed RNA polymerase subunit beta' (Illicium oligandrum (Star anise)).